The primary structure comprises 213 residues: Octanoyltransferase (213 aa).

Positions 27-209 (AATPDEVWLC…RLLAAMPEPA (183 aa)) constitute a BPL/LPL catalytic domain. Residues 66 to 73 (RGGQVTYH), 140 to 142 (ALG), and 153 to 155 (GVA) each bind substrate. Catalysis depends on Cys-171, which acts as the Acyl-thioester intermediate.

This sequence belongs to the LipB family.

Its subcellular location is the cytoplasm. It catalyses the reaction octanoyl-[ACP] + L-lysyl-[protein] = N(6)-octanoyl-L-lysyl-[protein] + holo-[ACP] + H(+). It participates in protein modification; protein lipoylation via endogenous pathway; protein N(6)-(lipoyl)lysine from octanoyl-[acyl-carrier-protein]: step 1/2. Catalyzes the transfer of endogenously produced octanoic acid from octanoyl-acyl-carrier-protein onto the lipoyl domains of lipoate-dependent enzymes. Lipoyl-ACP can also act as a substrate although octanoyl-ACP is likely to be the physiological substrate. The chain is Octanoyltransferase from Bordetella petrii (strain ATCC BAA-461 / DSM 12804 / CCUG 43448).